A 353-amino-acid chain; its full sequence is MNGTEGPYFYVPMVNTSGIVRSPYEYPQYYLVNPAAYAALGAYMFLLILVGFPINFLTLYVTIEHKKLRTPLNYILLNLAVADLFMVFGGFTTTMYTSMHGYFVLGRLGCNIEGFFATLGGEIALWSLVVLAIERWVVVCKPISNFRFGENHAIMGLAFTWLMALACAAPPLVGWSRYIPEGMQCSCGIDYYTRAEGFNNESFVIYMFICHFSIPLLVVFFCYGRLLCAVKEAAAAQQESETTQRAEREVTRMVIMMVIAFLVCWLPYASVAWWIFTHQGSDFGPVFMTIPAFFAKSSSIYNPMIYICLNKQFRHCMITTLCCGKNPFEEEEGASTASKTEASSVSSSSVSPA.

The Extracellular portion of the chain corresponds to 1–36 (MNGTEGPYFYVPMVNTSGIVRSPYEYPQYYLVNPAA). N-linked (GlcNAc...) asparagine glycosylation is found at N2 and N15. A helical transmembrane segment spans residues 37 to 61 (YAALGAYMFLLILVGFPINFLTLYV). Residues 62–73 (TIEHKKLRTPLN) are Cytoplasmic-facing. The chain crosses the membrane as a helical span at residues 74 to 96 (YILLNLAVADLFMVFGGFTTTMY). Topologically, residues 97–110 (TSMHGYFVLGRLGC) are extracellular. Residues C110 and C187 are joined by a disulfide bond. The chain crosses the membrane as a helical span at residues 111–133 (NIEGFFATLGGEIALWSLVVLAI). The 'Ionic lock' involved in activated form stabilization motif lies at 134 to 136 (ERW). Topologically, residues 134–152 (ERWVVVCKPISNFRFGENH) are cytoplasmic. A helical membrane pass occupies residues 153–173 (AIMGLAFTWLMALACAAPPLV). The Extracellular segment spans residues 174-202 (GWSRYIPEGMQCSCGIDYYTRAEGFNNES). The N-linked (GlcNAc...) asparagine glycan is linked to N200. A helical membrane pass occupies residues 203 to 224 (FVIYMFICHFSIPLLVVFFCYG). At 225–252 (RLLCAVKEAAAAQQESETTQRAEREVTR) the chain is on the cytoplasmic side. The helical transmembrane segment at 253–274 (MVIMMVIAFLVCWLPYASVAWW) threads the bilayer. Topologically, residues 275–286 (IFTHQGSDFGPV) are extracellular. The chain crosses the membrane as a helical span at residues 287-308 (FMTIPAFFAKSSSIYNPMIYIC). K296 carries the N6-(retinylidene)lysine modification. Residues 309–353 (LNKQFRHCMITTLCCGKNPFEEEEGASTASKTEASSVSSSSVSPA) are Cytoplasmic-facing. S-palmitoyl cysteine attachment occurs at residues C322 and C323. The segment at 331-353 (EEGASTASKTEASSVSSSSVSPA) is disordered. Low complexity predominate over residues 334 to 353 (ASTASKTEASSVSSSSVSPA).

This sequence belongs to the G-protein coupled receptor 1 family. Opsin subfamily. In terms of processing, phosphorylated on some or all of the serine and threonine residues present in the C-terminal region. Post-translationally, contains one covalently linked retinal chromophore.

The protein localises to the membrane. It localises to the cell projection. It is found in the cilium. Its subcellular location is the photoreceptor outer segment. Functionally, photoreceptor required for image-forming vision at low light intensity. While most salt water fish species use retinal as chromophore, most freshwater fish use 3-dehydroretinal, or a mixture of retinal and 3-dehydroretinal. Light-induced isomerization of 11-cis to all-trans retinal triggers a conformational change that activates signaling via G-proteins. Subsequent receptor phosphorylation mediates displacement of the bound G-protein alpha subunit by arrestin and terminates signaling. The protein is Rhodopsin (rho) of Diplodus vulgaris (Common two-banded seabream).